Consider the following 130-residue polypeptide: Small ribosomal subunit protein uS8 (130 aa).

Belongs to the universal ribosomal protein uS8 family. As to quaternary structure, part of the 30S ribosomal subunit. Contacts proteins S5 and S12.

In terms of biological role, one of the primary rRNA binding proteins, it binds directly to 16S rRNA central domain where it helps coordinate assembly of the platform of the 30S subunit. In Chromohalobacter salexigens (strain ATCC BAA-138 / DSM 3043 / CIP 106854 / NCIMB 13768 / 1H11), this protein is Small ribosomal subunit protein uS8.